Here is a 272-residue protein sequence, read N- to C-terminus: tRNA pseudouridine synthase A (272 aa).

Asp-62 acts as the Nucleophile in catalysis. Tyr-120 lines the substrate pocket.

Belongs to the tRNA pseudouridine synthase TruA family. Homodimer.

The enzyme catalyses uridine(38/39/40) in tRNA = pseudouridine(38/39/40) in tRNA. In terms of biological role, formation of pseudouridine at positions 38, 39 and 40 in the anticodon stem and loop of transfer RNAs. The protein is tRNA pseudouridine synthase A of Nitrosomonas europaea (strain ATCC 19718 / CIP 103999 / KCTC 2705 / NBRC 14298).